Here is a 223-residue protein sequence, read N- to C-terminus: Proteasome subunit beta type-1 (223 aa).

Belongs to the peptidase T1B family. As to quaternary structure, component of the 20S core complex of the 26S proteasome. The 26S proteasome is composed of a core protease (CP), known as the 20S proteasome, capped at one or both ends by the 19S regulatory particle (RP/PA700). The 20S proteasome core is composed of 28 subunits that are arranged in four stacked rings, resulting in a barrel-shaped structure. The two end rings are each formed by seven alpha subunits, and the two central rings are each formed by seven beta subunits. The catalytic chamber with the active sites is on the inside of the barrel. Present in all tissues examined. Slightly lower levels in roots.

It localises to the cytoplasm. It is found in the nucleus. Non-catalytic component of the proteasome, a multicatalytic proteinase complex which is characterized by its ability to cleave peptides with Arg, Phe, Tyr, Leu, and Glu adjacent to the leaving group at neutral or slightly basic pH. The proteasome has an ATP-dependent proteolytic activity. The protein is Proteasome subunit beta type-1 (PBF1) of Arabidopsis thaliana (Mouse-ear cress).